The following is a 237-amino-acid chain: 1-(5-phosphoribosyl)-5-[(5-phosphoribosylamino)methylideneamino] imidazole-4-carboxamide isomerase (237 aa).

The active-site Proton acceptor is Asp-8. Residue Asp-129 is the Proton donor of the active site.

The protein belongs to the HisA/HisF family.

The protein localises to the cytoplasm. It carries out the reaction 1-(5-phospho-beta-D-ribosyl)-5-[(5-phospho-beta-D-ribosylamino)methylideneamino]imidazole-4-carboxamide = 5-[(5-phospho-1-deoxy-D-ribulos-1-ylimino)methylamino]-1-(5-phospho-beta-D-ribosyl)imidazole-4-carboxamide. Its pathway is amino-acid biosynthesis; L-histidine biosynthesis; L-histidine from 5-phospho-alpha-D-ribose 1-diphosphate: step 4/9. This is 1-(5-phosphoribosyl)-5-[(5-phosphoribosylamino)methylideneamino] imidazole-4-carboxamide isomerase from Roseiflexus sp. (strain RS-1).